The primary structure comprises 362 residues: Ferredoxin--NADP reductase, leaf isozyme 1, chloroplastic (362 aa).

The N-terminal 62 residues, 1–62 (MAAVTAAAVS…DAAAVAAAPA (62 aa)), are a transit peptide targeting the chloroplast. Residues 83-205 (KEPYVGKCLL…TGPVGKEMLM (123 aa)) form the FAD-binding FR-type domain. FAD-binding positions include 141-144 (RLYS), 162-164 (CVK), tyrosine 168, 179-181 (VCS), and threonine 220. Residues serine 144 and lysine 164 each coordinate NADP(+). The cysteines at positions 180 and 185 are disulfide-linked. Serine 181 is subject to Phosphoserine. NADP(+) contacts are provided by residues threonine 220, 252-253 (VP), 282-283 (SR), lysine 292, 321-322 (GL), and glutamate 360.

It belongs to the ferredoxin--NADP reductase type 1 family. Component of high molecular weight thylakoid LFNRs-containing protein complexes containing LIR1, LFNR1, LFNR2, TIC62 and TROL proteins. Interacts directly with LIR1 and TIC62; LIR1 increases the affinity of LFNR1 and LFNR2 for TIC62. FAD is required as a cofactor. In terms of processing, may form interchain disulfide bonds with LIR1.

The protein localises to the plastid. It is found in the chloroplast stroma. The protein resides in the chloroplast thylakoid membrane. It carries out the reaction 2 reduced [2Fe-2S]-[ferredoxin] + NADP(+) + H(+) = 2 oxidized [2Fe-2S]-[ferredoxin] + NADPH. Its pathway is energy metabolism; photosynthesis. Its function is as follows. May play a key role in regulating the relative amounts of cyclic and non-cyclic electron flow to meet the demands of the plant for ATP and reducing power. This is Ferredoxin--NADP reductase, leaf isozyme 1, chloroplastic from Oryza sativa subsp. japonica (Rice).